The following is a 448-amino-acid chain: Portal protein (448 aa).

Residues 1-25 (MAKRGRKPKELVPGPGSIDPSDVPK) are disordered.

Belongs to the P23virus portal protein family. Homododecamer. Interacts with the capsid protein. Interacts with the terminase large subunit; this interaction allows the packaging of viral DNA.

The protein resides in the virion. Forms the portal vertex of the capsid. This portal plays critical roles in head assembly, genome packaging, neck/tail attachment, and genome ejection. The portal protein multimerizes as a single ring-shaped homododecamer arranged around a central channel. Forms the portal vertex of the capsid. This portal plays critical roles in head assembly, genome packaging, neck/tail attachment, and genome ejection. This chain is Portal protein, found in Thermus thermophilus (Thermus thermophilus phage G20c).